The chain runs to 336 residues: Pyridoxal 5'-phosphate synthase subunit PdxS (336 aa).

Asp33 is a binding site for D-ribose 5-phosphate. Residue Lys90 is the Schiff-base intermediate with D-ribose 5-phosphate of the active site. Gly162 lines the D-ribose 5-phosphate pocket. Arg174 is a binding site for D-glyceraldehyde 3-phosphate. D-ribose 5-phosphate-binding positions include Gly260 and 281 to 282 (GS).

This sequence belongs to the PdxS/SNZ family. In terms of assembly, in the presence of PdxT, forms a dodecamer of heterodimers.

The catalysed reaction is aldehydo-D-ribose 5-phosphate + D-glyceraldehyde 3-phosphate + L-glutamine = pyridoxal 5'-phosphate + L-glutamate + phosphate + 3 H2O + H(+). Its pathway is cofactor biosynthesis; pyridoxal 5'-phosphate biosynthesis. Catalyzes the formation of pyridoxal 5'-phosphate from ribose 5-phosphate (RBP), glyceraldehyde 3-phosphate (G3P) and ammonia. The ammonia is provided by the PdxT subunit. Can also use ribulose 5-phosphate and dihydroxyacetone phosphate as substrates, resulting from enzyme-catalyzed isomerization of RBP and G3P, respectively. The chain is Pyridoxal 5'-phosphate synthase subunit PdxS from Picrophilus torridus (strain ATCC 700027 / DSM 9790 / JCM 10055 / NBRC 100828 / KAW 2/3).